The primary structure comprises 131 residues: Cell cycle protein GpsB (131 aa).

Residues 39–76 (LDGIIRDYEAFTNEIDRLKEENTKLFSRVDELTKQLSV) adopt a coiled-coil conformation. The segment at 111–131 (KLSDSSVDNHDDGNHSDVDQY) is disordered. Residues 117–131 (VDNHDDGNHSDVDQY) show a composition bias toward basic and acidic residues.

It belongs to the GpsB family. As to quaternary structure, forms polymers through the coiled coil domains. Interacts with PBP1, MreC and EzrA.

It localises to the cytoplasm. Functionally, divisome component that associates with the complex late in its assembly, after the Z-ring is formed, and is dependent on DivIC and PBP2B for its recruitment to the divisome. Together with EzrA, is a key component of the system that regulates PBP1 localization during cell cycle progression. Its main role could be the removal of PBP1 from the cell pole after pole maturation is completed. Also contributes to the recruitment of PBP1 to the division complex. Not essential for septum formation. The protein is Cell cycle protein GpsB of Lacticaseibacillus casei (strain BL23) (Lactobacillus casei).